Here is a 149-residue protein sequence, read N- to C-terminus: Large-conductance mechanosensitive channel (149 aa).

3 helical membrane-spanning segments follow: residues 16–36, 40–60, and 89–109; these read VMDL…VNSV, LIMP…KFIL, and GSFI…FMMV.

The protein belongs to the MscL family. In terms of assembly, homopentamer.

It is found in the cell inner membrane. Channel that opens in response to stretch forces in the membrane lipid bilayer. May participate in the regulation of osmotic pressure changes within the cell. The protein is Large-conductance mechanosensitive channel of Paraburkholderia phymatum (strain DSM 17167 / CIP 108236 / LMG 21445 / STM815) (Burkholderia phymatum).